A 123-amino-acid chain; its full sequence is Large ribosomal subunit protein uL14 (123 aa).

Belongs to the universal ribosomal protein uL14 family. In terms of assembly, part of the 50S ribosomal subunit. Forms a cluster with proteins L3 and L19. In the 70S ribosome, L14 and L19 interact and together make contacts with the 16S rRNA in bridges B5 and B8.

Binds to 23S rRNA. Forms part of two intersubunit bridges in the 70S ribosome. The sequence is that of Large ribosomal subunit protein uL14 from Photorhabdus laumondii subsp. laumondii (strain DSM 15139 / CIP 105565 / TT01) (Photorhabdus luminescens subsp. laumondii).